Consider the following 403-residue polypeptide: Metacaspase-1A (403 aa).

The disordered stretch occupies residues methionine 1 to histidine 93. The segment covering glycine 18–proline 31 has biased composition (low complexity). Pro residues predominate over residues serine 32–serine 55. Catalysis depends on residues histidine 194 and cysteine 250.

The protein belongs to the peptidase C14B family.

In terms of biological role, involved in cell death (apoptosis). This is Metacaspase-1A (casA) from Aspergillus terreus (strain NIH 2624 / FGSC A1156).